Reading from the N-terminus, the 694-residue chain is Elongation factor G (694 aa).

Positions 8–284 (EKLRNIGIVA…AVIDFLPSPV (277 aa)) constitute a tr-type G domain. Residues 17–24 (AHIDAGKT), 81–85 (DTPGH), and 135–138 (NKMD) each bind GTP.

Belongs to the TRAFAC class translation factor GTPase superfamily. Classic translation factor GTPase family. EF-G/EF-2 subfamily.

The protein localises to the cytoplasm. In terms of biological role, catalyzes the GTP-dependent ribosomal translocation step during translation elongation. During this step, the ribosome changes from the pre-translocational (PRE) to the post-translocational (POST) state as the newly formed A-site-bound peptidyl-tRNA and P-site-bound deacylated tRNA move to the P and E sites, respectively. Catalyzes the coordinated movement of the two tRNA molecules, the mRNA and conformational changes in the ribosome. The polypeptide is Elongation factor G (Persephonella marina (strain DSM 14350 / EX-H1)).